Consider the following 88-residue polypeptide: UPF0250 protein swp_3927 (88 aa).

Belongs to the UPF0250 family.

This Shewanella piezotolerans (strain WP3 / JCM 13877) protein is UPF0250 protein swp_3927.